Reading from the N-terminus, the 196-residue chain is Dephospho-CoA kinase (196 aa).

The region spanning 5–196 (IIGLTGGIAT…QVDIALNFEL (192 aa)) is the DPCK domain. 13–18 (ATGKTT) lines the ATP pocket.

It belongs to the CoaE family.

Its subcellular location is the cytoplasm. The catalysed reaction is 3'-dephospho-CoA + ATP = ADP + CoA + H(+). It participates in cofactor biosynthesis; coenzyme A biosynthesis; CoA from (R)-pantothenate: step 5/5. Functionally, catalyzes the phosphorylation of the 3'-hydroxyl group of dephosphocoenzyme A to form coenzyme A. The sequence is that of Dephospho-CoA kinase from Nostoc sp. (strain PCC 7120 / SAG 25.82 / UTEX 2576).